We begin with the raw amino-acid sequence, 347 residues long: Lipoyl synthase (347 aa).

Residues cysteine 77, cysteine 82, cysteine 88, cysteine 103, cysteine 107, cysteine 110, and serine 317 each contribute to the [4Fe-4S] cluster site. The Radical SAM core domain maps to 89–306; sequence FADGTATFMI…MDYGKKIGFF (218 aa).

This sequence belongs to the radical SAM superfamily. Lipoyl synthase family. The cofactor is [4Fe-4S] cluster.

It is found in the cytoplasm. The catalysed reaction is [[Fe-S] cluster scaffold protein carrying a second [4Fe-4S](2+) cluster] + N(6)-octanoyl-L-lysyl-[protein] + 2 oxidized [2Fe-2S]-[ferredoxin] + 2 S-adenosyl-L-methionine + 4 H(+) = [[Fe-S] cluster scaffold protein] + N(6)-[(R)-dihydrolipoyl]-L-lysyl-[protein] + 4 Fe(3+) + 2 hydrogen sulfide + 2 5'-deoxyadenosine + 2 L-methionine + 2 reduced [2Fe-2S]-[ferredoxin]. It participates in protein modification; protein lipoylation via endogenous pathway; protein N(6)-(lipoyl)lysine from octanoyl-[acyl-carrier-protein]: step 2/2. Its function is as follows. Catalyzes the radical-mediated insertion of two sulfur atoms into the C-6 and C-8 positions of the octanoyl moiety bound to the lipoyl domains of lipoate-dependent enzymes, thereby converting the octanoylated domains into lipoylated derivatives. The sequence is that of Lipoyl synthase from Psychrobacter cryohalolentis (strain ATCC BAA-1226 / DSM 17306 / VKM B-2378 / K5).